The primary structure comprises 287 residues: tRNA selenocysteine 1-associated protein 1 (287 aa).

RRM domains are found at residues 3–86 (ASLW…YATY) and 96–175 (YSLF…VAIP).

It belongs to the RRM TRSPAP family. As to quaternary structure, component of the tRNA(Sec) complex composed at least of EEFSEC, SECISBP2, SEPHS1, SEPSECS, TRNAU1AP and tRNA(Sec). Associates with mRNP and/or polysomes. Found in a complex with tRNA(Sec). Interacts with SEPSECS. Ubiquitous.

It localises to the nucleus. The protein localises to the cytoplasm. Its function is as follows. Involved in the early steps of selenocysteine biosynthesis and tRNA(Sec) charging to the later steps resulting in the cotranslational incorporation of selenocysteine into selenoproteins. Stabilizes the SECISBP2, EEFSEC and tRNA(Sec) complex. May be involved in the methylation of tRNA(Sec). Enhances efficiency of selenoproteins synthesis. This chain is tRNA selenocysteine 1-associated protein 1 (Trnau1ap), found in Rattus norvegicus (Rat).